The sequence spans 312 residues: Polyamine aminopropyltransferase (312 aa).

A PABS domain is found at Phe7 to Gln247. Gln36 contributes to the S-methyl-5'-thioadenosine binding site. 2 residues coordinate spermidine: His67 and Glu95. Residues Asp115 and Asp147 to Ala148 each bind S-methyl-5'-thioadenosine. Asp165 functions as the Proton acceptor in the catalytic mechanism. Pro174 contributes to the S-methyl-5'-thioadenosine binding site.

Belongs to the spermidine/spermine synthase family. Homodimer or homotetramer.

It is found in the cytoplasm. The enzyme catalyses S-adenosyl 3-(methylsulfanyl)propylamine + putrescine = S-methyl-5'-thioadenosine + spermidine + H(+). It functions in the pathway amine and polyamine biosynthesis; spermidine biosynthesis; spermidine from putrescine: step 1/1. Catalyzes the irreversible transfer of a propylamine group from the amino donor S-adenosylmethioninamine (decarboxy-AdoMet) to putrescine (1,4-diaminobutane) to yield spermidine. The chain is Polyamine aminopropyltransferase from Synechococcus sp. (strain JA-2-3B'a(2-13)) (Cyanobacteria bacterium Yellowstone B-Prime).